Here is a 505-residue protein sequence, read N- to C-terminus: Zinc metalloproteinase/disintegrin (505 aa).

The signal sequence occupies residues 1 to 20 (MIQVLLVIICLAAFPYQGTS). The propeptide occupies 21–214 (IILESGNVND…PIKKASQSNL (194 aa)). 2 repeat units span residues 153–179 (KYED…YEPI) and 180–206 (KYED…YEPI). In terms of domain architecture, Peptidase M12B spans 220–416 (RYIELVIVAD…QKPQCILNKP (197 aa)). Residues Glu223 and Asp307 each coordinate Ca(2+). His356 is a binding site for Zn(2+). Glu357 is a catalytic residue. Zn(2+) contacts are provided by His360 and His366. 2 disulfides stabilise this stretch: Cys371/Cys395 and Cys373/Cys378. Ca(2+)-binding residues include Cys411 and Asn414. A propeptide spanning residues 417–432 (LRTDTVSTPVSGNELL) is cleaved from the precursor. The Disintegrin domain maps to 424–505 (TPVSGNELLE…AGCPRNPFHA (82 aa)). Disulfide bonds link Cys438–Cys453, Cys440–Cys448, Cys447–Cys470, Cys461–Cys467, Cys466–Cys491, and Cys479–Cys498. Residues 483 to 485 (RGD) carry the Cell attachment site motif.

This sequence belongs to the venom metalloproteinase (M12B) family. P-II subfamily. P-IIa sub-subfamily. Monomer. Requires Zn(2+) as cofactor. As to expression, expressed by the venom gland.

Its subcellular location is the secreted. Its function is as follows. Impairs hemostasis in the envenomed animal. Inhibits platelet aggregation induced by ADP, thrombin, platelet-activating factor and collagen. Acts by inhibiting fibrinogen interaction with platelet receptors GPIIb/GPIIIa (ITGA2B/ITGB3). This chain is Zinc metalloproteinase/disintegrin, found in Gloydius brevicauda (Korean slamosa snake).